Consider the following 245-residue polypeptide: uncharacterized protein (245 aa).

A run of 4 helical transmembrane segments spans residues 10–30 (FYTLFGLIWSLLVFFFLSPWY), 94–114 (TLAFLSTTFLIYFTIIFYVHI), 134–154 (VLIGSPLVSFFLSFITLFLII), and 196–216 (RGWIILMVDTILTFFATIYCW).

The protein resides in the membrane. This is an uncharacterized protein from Dictyostelium discoideum (Social amoeba).